The following is a 460-amino-acid chain: Serine--tRNA ligase (460 aa).

255-257 (TAE) is a binding site for L-serine. ATP is bound by residues 286-288 (RKE) and Val302. L-serine is bound at residue Glu309. 373–376 (EMVS) contributes to the ATP binding site. Residue Thr409 coordinates L-serine.

It belongs to the class-II aminoacyl-tRNA synthetase family. Type-1 seryl-tRNA synthetase subfamily. As to quaternary structure, homodimer. The tRNA molecule binds across the dimer.

The protein resides in the cytoplasm. It carries out the reaction tRNA(Ser) + L-serine + ATP = L-seryl-tRNA(Ser) + AMP + diphosphate + H(+). The catalysed reaction is tRNA(Sec) + L-serine + ATP = L-seryl-tRNA(Sec) + AMP + diphosphate + H(+). It functions in the pathway aminoacyl-tRNA biosynthesis; selenocysteinyl-tRNA(Sec) biosynthesis; L-seryl-tRNA(Sec) from L-serine and tRNA(Sec): step 1/1. Catalyzes the attachment of serine to tRNA(Ser). Is also able to aminoacylate tRNA(Sec) with serine, to form the misacylated tRNA L-seryl-tRNA(Sec), which will be further converted into selenocysteinyl-tRNA(Sec). This is Serine--tRNA ligase from Hyperthermus butylicus (strain DSM 5456 / JCM 9403 / PLM1-5).